A 907-amino-acid chain; its full sequence is CRM-domain containing factor CFM3B, chloroplastic (907 aa).

The transit peptide at Met-1–Ser-59 directs the protein to the chloroplast. Disordered regions lie at residues Gly-62–Val-89 and Leu-101–Ser-123. Residues Arg-70 to Arg-84 show a composition bias toward polar residues. 2 CRM domains span residues Met-220–Gly-316 and Ser-421–Glu-518. Residues Ser-621 to Lys-654 are a coiled coil. The region spanning Glu-663–Arg-763 is the CRM 3 domain. Positions Met-824–Pro-907 are disordered. 2 stretches are compositionally biased toward acidic residues: residues Ser-828–Gly-857 and Thr-868–Phe-881. The span at Gly-882–Glu-897 shows a compositional bias: polar residues.

In terms of assembly, interacts with RNA. Part of large ribonucleo-protein particles that contain CAF1 and/or CAF2, and RNC1. Interacts with RFC3 in plastids. Expressed at low levels in roots and shoots.

The protein resides in the plastid. Its subcellular location is the chloroplast. Its function is as follows. Binds specific group II introns in chloroplasts and facilitates their splicing. Exhibits non-specific action during plastid rRNA biogenesis; RFC3 prevents unaccurate splicing to improve the accuracy of plastid rRNA processing. Acts on subgroup IIB introns. The substrates of the subgroup IIB also require the CRM domain proteins CAF1 or CAF2, with a simultaneous binding of CFM3B and CAF1 or CAF2. Required for seed development. This is CRM-domain containing factor CFM3B, chloroplastic from Arabidopsis thaliana (Mouse-ear cress).